The primary structure comprises 367 residues: Alginate lyase (367 aa).

Positions methionine 1–alanine 24 are cleaved as a signal peptide. Residues serine 63–lysine 64, histidine 136–threonine 137, and tyrosine 254 contribute to the substrate site.

It belongs to the polysaccharide lyase 5 family.

The protein localises to the periplasm. The enzyme catalyses Eliminative cleavage of alginate to give oligosaccharides with 4-deoxy-alpha-L-erythro-hex-4-enuronosyl groups at their non-reducing ends and beta-D-mannuronate at their reducing end.. Catalyzes the depolymerization of alginate by cleaving the beta-1,4 glycosidic bond between two adjacent sugar residues via a beta-elimination mechanism. May serve to degrade mislocalized alginate that is trapped in the periplasmic space. The sequence is that of Alginate lyase from Pseudomonas putida (strain W619).